The primary structure comprises 507 residues: Maturase K (507 aa).

The protein belongs to the intron maturase 2 family. MatK subfamily.

It is found in the plastid. Its subcellular location is the chloroplast. Usually encoded in the trnK tRNA gene intron. Probably assists in splicing its own and other chloroplast group II introns. The protein is Maturase K of Araucaria heterophylla (Norfolk Island pine).